The following is a 186-amino-acid chain: UPF0397 protein LCABL_04350 (186 aa).

5 consecutive transmembrane segments (helical) span residues 12–32 (VVAIGIGTAILFILKRFAVIP), 45–65 (GFLGFIATLFGPIAGFFIGFL), 77–97 (TPWWTWVFTTGLVGMVIGLFW), 112–132 (IVSFNLLQIITNVVSWSLIAP), and 150–170 (GIVSAISNSIATGVIGTILLV).

This sequence belongs to the UPF0397 family.

The protein resides in the cell membrane. The chain is UPF0397 protein LCABL_04350 from Lacticaseibacillus casei (strain BL23) (Lactobacillus casei).